A 299-amino-acid chain; its full sequence is N-acetylaspartate synthetase (299 aa).

Over residues 44-57 the composition is skewed to pro residues; that stretch reads AAPGPAAAPPPAAG. Residues 44-70 are disordered; that stretch reads AAPGPAAAPPPAAGPQPHGGTGGAGPP. The span at 60–70 shows a compositional bias: gly residues; it reads PHGGTGGAGPP. Residues 118–138 traverse the membrane as a helical segment; sequence YALLAALCFAVTRSLLLTCLV. The N-acetyltransferase domain maps to 143-280; sequence LALRYYYSRK…VLPGMTLSLA (138 aa).

This sequence belongs to the NAT8 family. As to expression, expressed in brain, including in mesencephalic dopaminergic neurons of the substantia nigra and ventral tegmental area and oligodendrocytes. Expressed in cortical pyramidal neurons and granule cells of the hippocampus (at protein level).

Its subcellular location is the cytoplasm. It is found in the microsome membrane. The protein resides in the mitochondrion membrane. The protein localises to the endoplasmic reticulum membrane. The enzyme catalyses L-aspartate + acetyl-CoA = N-acetyl-L-aspartate + CoA + H(+). Its activity is regulated as follows. Aminooxyacetic acid (AOAA) blocks its activity in both cytoplasm and mitochondria. Its function is as follows. Catalyzes the synthesis of N-acetylaspartate acid (NAA) from L-aspartate and acetyl-CoA. Promotes dopamine uptake by regulating TNF-alpha expression. Attenuates methamphetamine-induced inhibition of dopamine uptake. This is N-acetylaspartate synthetase (Nat8l) from Rattus norvegicus (Rat).